The sequence spans 355 residues: Uroporphyrinogen decarboxylase (355 aa).

Residues 27–31 (RQAGR), aspartate 77, tyrosine 154, threonine 209, and histidine 328 contribute to the substrate site.

The protein belongs to the uroporphyrinogen decarboxylase family. As to quaternary structure, homodimer.

The protein resides in the cytoplasm. The enzyme catalyses uroporphyrinogen III + 4 H(+) = coproporphyrinogen III + 4 CO2. The protein operates within porphyrin-containing compound metabolism; protoporphyrin-IX biosynthesis; coproporphyrinogen-III from 5-aminolevulinate: step 4/4. Its function is as follows. Catalyzes the decarboxylation of four acetate groups of uroporphyrinogen-III to yield coproporphyrinogen-III. In Colwellia psychrerythraea (strain 34H / ATCC BAA-681) (Vibrio psychroerythus), this protein is Uroporphyrinogen decarboxylase.